A 411-amino-acid chain; its full sequence is Serine hydroxymethyltransferase (411 aa).

(6S)-5,6,7,8-tetrahydrofolate is bound at residue glycine 120–leucine 122. An N6-(pyridoxal phosphate)lysine modification is found at lysine 225. A (6S)-5,6,7,8-tetrahydrofolate-binding site is contributed by serine 350 to phenylalanine 352.

The protein belongs to the SHMT family. Homodimer. Requires pyridoxal 5'-phosphate as cofactor.

It localises to the cytoplasm. The enzyme catalyses (6R)-5,10-methylene-5,6,7,8-tetrahydrofolate + glycine + H2O = (6S)-5,6,7,8-tetrahydrofolate + L-serine. Its pathway is one-carbon metabolism; tetrahydrofolate interconversion. The protein operates within amino-acid biosynthesis; glycine biosynthesis; glycine from L-serine: step 1/1. Catalyzes the reversible interconversion of serine and glycine with tetrahydrofolate (THF) serving as the one-carbon carrier. This reaction serves as the major source of one-carbon groups required for the biosynthesis of purines, thymidylate, methionine, and other important biomolecules. Also exhibits THF-independent aldolase activity toward beta-hydroxyamino acids, producing glycine and aldehydes, via a retro-aldol mechanism. The sequence is that of Serine hydroxymethyltransferase from Limosilactobacillus reuteri (strain DSM 20016) (Lactobacillus reuteri).